Consider the following 376-residue polypeptide: Ribosomal RNA large subunit methyltransferase G (376 aa).

This sequence belongs to the methyltransferase superfamily. RlmG family.

It is found in the cytoplasm. The enzyme catalyses guanosine(1835) in 23S rRNA + S-adenosyl-L-methionine = N(2)-methylguanosine(1835) in 23S rRNA + S-adenosyl-L-homocysteine + H(+). In terms of biological role, specifically methylates the guanine in position 1835 (m2G1835) of 23S rRNA. This is Ribosomal RNA large subunit methyltransferase G from Klebsiella pneumoniae (strain 342).